We begin with the raw amino-acid sequence, 377 residues long: Alanine racemase (377 aa).

Lys37 (proton acceptor; specific for D-alanine) is an active-site residue. N6-(pyridoxal phosphate)lysine is present on Lys37. Substrate is bound at residue Arg135. Catalysis depends on Tyr271, which acts as the Proton acceptor; specific for L-alanine. Met319 lines the substrate pocket.

The protein belongs to the alanine racemase family. Requires pyridoxal 5'-phosphate as cofactor.

The enzyme catalyses L-alanine = D-alanine. It participates in amino-acid biosynthesis; D-alanine biosynthesis; D-alanine from L-alanine: step 1/1. Catalyzes the interconversion of L-alanine and D-alanine. May also act on other amino acids. The sequence is that of Alanine racemase (alr) from Helicobacter pylori (strain HPAG1).